A 286-amino-acid chain; its full sequence is Phosphate import ATP-binding protein PstB (286 aa).

The disordered stretch occupies residues 1 to 27 (MEPKETLRQRWPGRGRTEETGAMKKSD). Residues 15–27 (GRTEETGAMKKSD) are compositionally biased toward basic and acidic residues. In terms of domain architecture, ABC transporter spans 33-281 (MTVEHLNMYY…PDRKETEDYV (249 aa)). Position 65–72 (65–72 (GPSGCGKS)) interacts with ATP.

It belongs to the ABC transporter superfamily. Phosphate importer (TC 3.A.1.7) family. In terms of assembly, the complex is composed of two ATP-binding proteins (PstB), two transmembrane proteins (PstC and PstA) and a solute-binding protein (PstS).

It is found in the cell membrane. The enzyme catalyses phosphate(out) + ATP + H2O = ADP + 2 phosphate(in) + H(+). Functionally, part of the ABC transporter complex PstSACB involved in phosphate import. Responsible for energy coupling to the transport system. This Rubrobacter xylanophilus (strain DSM 9941 / JCM 11954 / NBRC 16129 / PRD-1) protein is Phosphate import ATP-binding protein PstB.